The chain runs to 65 residues: MRLLLVFFFLSLLDQAPPARSGISRVRICREKGGHCDADCHLEERHLGGCRAAYLTFCCRKESPR.

A signal peptide spans 1–21 (MRLLLVFFFLSLLDQAPPARS). Disulfide bonds link cysteine 29–cysteine 58, cysteine 36–cysteine 50, and cysteine 40–cysteine 59. Positions 62–65 (ESPR) are excised as a propeptide.

Belongs to the beta-defensin family. Lowly expressed in spleen, and expressed at lower levels in kidney, lung and testis.

The protein resides in the secreted. Its function is as follows. Has antimicrobial activity. The protein is Defensin-B3 of Ornithorhynchus anatinus (Duckbill platypus).